The sequence spans 231 residues: Aquaporin Z (231 aa).

A run of 2 helical transmembrane segments spans residues 9-29 and 34-54; these read LLGT…AAAF and IGFV…IYAV. Positions 63 to 65 match the NPA 1 motif; it reads NPA. 3 helical membrane-spanning segments follow: residues 82-102, 133-153, and 160-180; these read IPYI…LYVI, SAIV…IGAT, and GFAP…SIPI. Positions 186–188 match the NPA 2 motif; sequence NPA. A helical transmembrane segment spans residues 202 to 222; sequence LEQLWFFWVMPIIGGIVGGGI.

Belongs to the MIP/aquaporin (TC 1.A.8) family. As to quaternary structure, homotetramer.

The protein localises to the cell inner membrane. The catalysed reaction is H2O(in) = H2O(out). Its function is as follows. Channel that permits osmotically driven movement of water in both directions. It is involved in the osmoregulation and in the maintenance of cell turgor during volume expansion in rapidly growing cells. It mediates rapid entry or exit of water in response to abrupt changes in osmolarity. The sequence is that of Aquaporin Z from Photorhabdus laumondii subsp. laumondii (strain DSM 15139 / CIP 105565 / TT01) (Photorhabdus luminescens subsp. laumondii).